A 75-amino-acid polypeptide reads, in one-letter code: MANKPFFRRRKVCPFSGDNAPAIDYKDTRLLQRYISERGKIVPSRITAVSAKKQRELAAAIKRARFLALLPYAVK.

It belongs to the bacterial ribosomal protein bS18 family. In terms of assembly, part of the 30S ribosomal subunit. Forms a tight heterodimer with protein bS6.

Its function is as follows. Binds as a heterodimer with protein bS6 to the central domain of the 16S rRNA, where it helps stabilize the platform of the 30S subunit. This chain is Small ribosomal subunit protein bS18, found in Cereibacter sphaeroides (strain ATCC 17029 / ATH 2.4.9) (Rhodobacter sphaeroides).